The primary structure comprises 468 residues: Probable 1,4-beta-D-glucan cellobiohydrolase C (468 aa).

The signal sequence occupies residues 1 to 18 (MGRVSSLALALLLPAVQA). In terms of domain architecture, CBM1 spans 19 to 54 (QQTLWGQCGGIGWTGPTNCVAGAACSTQNPYYAQCL). 2 cysteine pairs are disulfide-bonded: C26–C43 and C37–C53. Positions 57–106 (TATTSTTLTTTTRVTTTTTSTTSKSSSTGSTTTTKSTGTTTTSGSSTTIT) are thr-rich linker. A disordered region spans residues 68-107 (TRVTTTTTSTTSKSSSTGSTTTTKSTGTTTTSGSSTTITS). The segment at 107–468 (SAPSGNPFSG…QLLKNANPAF (362 aa)) is catalytic. D198 is a catalytic residue. Disulfide bonds link C199–C258 and C390–C437. The active-site Proton donor is D244. D423 (nucleophile) is an active-site residue.

This sequence belongs to the glycosyl hydrolase 6 (cellulase B) family.

The protein resides in the secreted. The enzyme catalyses Hydrolysis of (1-&gt;4)-beta-D-glucosidic linkages in cellulose and cellotetraose, releasing cellobiose from the non-reducing ends of the chains.. The biological conversion of cellulose to glucose generally requires three types of hydrolytic enzymes: (1) Endoglucanases which cut internal beta-1,4-glucosidic bonds; (2) Exocellobiohydrolases that cut the disaccharide cellobiose from the non-reducing end of the cellulose polymer chain; (3) Beta-1,4-glucosidases which hydrolyze the cellobiose and other short cello-oligosaccharides to glucose. In Aspergillus terreus (strain NIH 2624 / FGSC A1156), this protein is Probable 1,4-beta-D-glucan cellobiohydrolase C (cbhC).